The sequence spans 706 residues: Probable N(6)-adenosine-methyltransferase MT-A70-like (706 aa).

Disordered regions lie at residues 64–114 and 223–261; these read RPFV…VAAA and TLPL…PDMW. Residues 103-114 show a composition bias toward low complexity; it reads SPGSSPASVAAA. The span at 227-236 shows a compositional bias: pro residues; it reads LQPPPAPQMP. Residues 479 to 480 and Asp497 contribute to the S-adenosyl-L-methionine site; that span reads DI. The segment at 567–580 is positively charged region required for RNA-binding; it reads RIIRTGRTGHWLNH. Residues Lys614, 637–640, and 650–651 contribute to the S-adenosyl-L-methionine site; these read RMHN and NQ. The disordered stretch occupies residues 669–706; the sequence is AYPDSEVQPPSPPRASAPIDGDQGTSQKPTVSDGERPA.

Belongs to the MT-A70-like family.

The protein resides in the nucleus. It catalyses the reaction an adenosine in mRNA + S-adenosyl-L-methionine = an N(6)-methyladenosine in mRNA + S-adenosyl-L-homocysteine + H(+). Its function is as follows. Probable N6-methyltransferase that methylates adenosine residues of some mRNAs. N6-methyladenosine (m6A), which is present at internal sites of some mRNAs, may play a role in the efficiency of mRNA splicing, transport or translation. This chain is Probable N(6)-adenosine-methyltransferase MT-A70-like, found in Oryza sativa subsp. japonica (Rice).